We begin with the raw amino-acid sequence, 79 residues long: Delta-hormotoxin-Cpt1b (79 aa).

Positions 1–20 are cleaved as a signal peptide; that stretch reads MKTQVLALFVLCVLFCLAES. Positions 21-31 are excised as a propeptide; sequence RTTLNKRNDIE. 3 disulfide bridges follow: C36-C75, C38-C66, and C56-C76.

Belongs to the sea anemone sodium channel inhibitory toxin family.

The protein resides in the secreted. It is found in the nematocyst. In terms of biological role, in neuromuscular preparation of crustaceans, the toxin increased neurotransmitter release, causing repetitive firing of the axons. May affect sodium channels (Nav). The chain is Delta-hormotoxin-Cpt1b from Calliactis parasitica (Sea anemone).